Here is a 108-residue protein sequence, read N- to C-terminus: MNRNQAIIASLCYFSVFIAPIIVPIVAYFVVNEKETKRHAIRSLISHIVPFVGWLFLFIALLGGAVAIDGDSLLPVFVIIGGAVIYFLVVIGIIIWNVIQGIKVLRAA.

Transmembrane regions (helical) follow at residues 10 to 32 (SLCY…FVVN), 45 to 67 (ISHI…GAVA), and 77 to 99 (FVII…WNVI).

It localises to the cell membrane. This is an uncharacterized protein from Bacillus subtilis (strain 168).